The following is a 212-amino-acid chain: ATP phosphoribosyltransferase (212 aa).

The protein belongs to the ATP phosphoribosyltransferase family. Short subfamily. As to quaternary structure, heteromultimer composed of HisG and HisZ subunits.

It localises to the cytoplasm. The catalysed reaction is 1-(5-phospho-beta-D-ribosyl)-ATP + diphosphate = 5-phospho-alpha-D-ribose 1-diphosphate + ATP. It functions in the pathway amino-acid biosynthesis; L-histidine biosynthesis; L-histidine from 5-phospho-alpha-D-ribose 1-diphosphate: step 1/9. Functionally, catalyzes the condensation of ATP and 5-phosphoribose 1-diphosphate to form N'-(5'-phosphoribosyl)-ATP (PR-ATP). Has a crucial role in the pathway because the rate of histidine biosynthesis seems to be controlled primarily by regulation of HisG enzymatic activity. In Citrifermentans bemidjiense (strain ATCC BAA-1014 / DSM 16622 / JCM 12645 / Bem) (Geobacter bemidjiensis), this protein is ATP phosphoribosyltransferase.